Here is a 151-residue protein sequence, read N- to C-terminus: Probable cGMP 3',5'-cyclic phosphodiesterase subunit delta (151 aa).

Belongs to the PDE6D/unc-119 family. Interacts with Pde6.

Its subcellular location is the nucleus. The protein resides in the cytoplasm. This Drosophila sechellia (Fruit fly) protein is Probable cGMP 3',5'-cyclic phosphodiesterase subunit delta.